We begin with the raw amino-acid sequence, 1171 residues long: ATP-dependent helicase/deoxyribonuclease subunit B (1171 aa).

Residues 1-390 form the UvrD-like helicase ATP-binding domain; the sequence is MSLRFVIGRA…HPLVECIRSA (390 aa). 8 to 15 provides a ligand contact to ATP; that stretch reads GRAGSGKS. A UvrD-like helicase C-terminal domain is found at 281-587; it reads MEQPRFHSPA…QFANIPPSLD (307 aa). Residues C805, C1129, C1132, and C1138 each coordinate [4Fe-4S] cluster.

Belongs to the helicase family. AddB/RexB type 1 subfamily. As to quaternary structure, heterodimer of AddA and AddB. Mg(2+) serves as cofactor. It depends on [4Fe-4S] cluster as a cofactor.

Its function is as follows. The heterodimer acts as both an ATP-dependent DNA helicase and an ATP-dependent, dual-direction single-stranded exonuclease. Recognizes the chi site generating a DNA molecule suitable for the initiation of homologous recombination. The AddB subunit has 5' -&gt; 3' nuclease activity but not helicase activity. This Bacillus cereus (strain ATCC 10987 / NRS 248) protein is ATP-dependent helicase/deoxyribonuclease subunit B.